Reading from the N-terminus, the 377-residue chain is Succinyl-diaminopimelate desuccinylase (377 aa).

H68 is a Zn(2+) binding site. D70 is an active-site residue. Position 101 (D101) interacts with Zn(2+). E135 (proton acceptor) is an active-site residue. Zn(2+) contacts are provided by E136, E164, and H350.

Belongs to the peptidase M20A family. DapE subfamily. As to quaternary structure, homodimer. Requires Zn(2+) as cofactor. The cofactor is Co(2+).

The enzyme catalyses N-succinyl-(2S,6S)-2,6-diaminopimelate + H2O = (2S,6S)-2,6-diaminopimelate + succinate. It participates in amino-acid biosynthesis; L-lysine biosynthesis via DAP pathway; LL-2,6-diaminopimelate from (S)-tetrahydrodipicolinate (succinylase route): step 3/3. Its function is as follows. Catalyzes the hydrolysis of N-succinyl-L,L-diaminopimelic acid (SDAP), forming succinate and LL-2,6-diaminopimelate (DAP), an intermediate involved in the bacterial biosynthesis of lysine and meso-diaminopimelic acid, an essential component of bacterial cell walls. In Acinetobacter baumannii (strain AB0057), this protein is Succinyl-diaminopimelate desuccinylase.